The sequence spans 604 residues: MRRCTNIRPGETGMDVTSRCTLGDPNKLPEGVPQPARMPYISDKHPRQTLEVINLLRKHRELCDVVLVVGAKKIYAHRVILSACSPYFRAMFTGELAESRQTEVVIRDIDERAMELLIDFAYTSQITVEEGNVQTLLPAACLLQLAEIQEACCEFLKRQLDPSNCLGIRAFADTHSCRELLRIADKFTQHNFQEVMESEEFMLLPANQLIDIISSDELNVRSEEQVFNAVMAWVKYSIQERRPQLPQVLQHVRLPLLSPKFLVGTVGSDPLIKSDEECRDLVDEAKNYLLLPQERPLMQGPRTRPRKPIRCGEVLFAVGGWCSGDAISSVERYDPQTNEWRMVASMSKRRCGVGVSVLDDLLYAVGGHDGSSYLNSVERYDPKTNQWSSDVAPTSTCRTSVGVAVLGGFLYAVGGQDGVSCLNIVERYDPKENKWTRVASMSTRRLGVAVAVLGGFLYAVGGSDGTSPLNTVERYNPQENRWHTIAPMGTRRKHLGCAVYQDMIYAVGGRDDTTELSSAERYNPRTNQWSPVVAMTSRRSGVGLAVVNGQLMAVGGFDGTTYLKTIEVFDPDANTWRLYGGMNYRRLGGGVGVIKMTHCESHIW.

Residues 63-130 (CDVVLVVGAK…AYTSQITVEE (68 aa)) form the BTB domain. The region spanning 165–267 (CLGIRAFADT…SPKFLVGTVG (103 aa)) is the BACK domain. 6 Kelch repeats span residues 314-360 (VLFA…VLDD), 362-408 (LYAV…VLGG), 409-455 (FLYA…VLGG), 457-502 (LYAV…VYQD), 504-549 (IYAV…VVNG), and 551-596 (LMAV…VIKM).

As to quaternary structure, component of the BCR(KLHL20) E3 ubiquitin ligase complex, at least composed of CUL3, KLHL20 and RBX1. Interacts with PDZ-RhoGEF/ARHGEF11, DAPK1, PML and CORO7. Interacts with F-actin. Interacts with IFN-gamma (IFNG). Interacts (via kelch repeats) with IVNS1ABP (via kelch repeats); this interaction blocks the assembly of CUL3-KLHL20 complex.

Its subcellular location is the cytoplasm. It is found in the perinuclear region. It localises to the nucleus. The protein localises to the golgi apparatus. The protein resides in the trans-Golgi network. Its subcellular location is the cell projection. It is found in the axon. It localises to the dendrite. The protein operates within protein modification; protein ubiquitination. Substrate-specific adapter of a BCR (BTB-CUL3-RBX1) E3 ubiquitin-protein ligase complex involved in interferon response and anterograde Golgi to endosome transport. The BCR(KLHL20) E3 ubiquitin ligase complex mediates the ubiquitination of DAPK1, leading to its degradation by the proteasome, thereby acting as a negative regulator of apoptosis. The BCR(KLHL20) E3 ubiquitin ligase complex also specifically mediates 'Lys-33'-linked ubiquitination. Involved in anterograde Golgi to endosome transport by mediating 'Lys-33'-linked ubiquitination of CORO7, promoting interaction between CORO7 and EPS15, thereby facilitating actin polymerization and post-Golgi trafficking. Also acts as a regulator of endothelial migration during angiogenesis by controlling the activation of Rho GTPases. The BCR(KLHL20) E3 ubiquitin ligase complex acts as a regulator of neurite outgrowth by mediating ubiquitination and degradation of PDZ-RhoGEF/ARHGEF11. The chain is Kelch-like protein 20 (Klhl20) from Mus musculus (Mouse).